The sequence spans 557 residues: Potassium-transporting ATPase potassium-binding subunit (557 aa).

The next 10 helical transmembrane spans lie at 1 to 21 (MEIL…IPIG), 62 to 82 (QYIF…YIIL), 132 to 152 (IVIT…ALAF), 176 to 196 (ILLP…VPQT), 253 to 273 (VQII…GHMI), 279 to 299 (AVAI…ICFS), 371 to 391 (IFGG…LTVF), 415 to 435 (LVAF…ALAL), 482 to 502 (VSAG…LLAV), and 528 to 548 (VTLI…AVAL).

It belongs to the KdpA family. As to quaternary structure, the system is composed of three essential subunits: KdpA, KdpB and KdpC.

The protein resides in the cell membrane. Part of the high-affinity ATP-driven potassium transport (or Kdp) system, which catalyzes the hydrolysis of ATP coupled with the electrogenic transport of potassium into the cytoplasm. This subunit binds the extracellular potassium ions and delivers the ions to the membrane domain of KdpB through an intramembrane tunnel. This chain is Potassium-transporting ATPase potassium-binding subunit, found in Clostridium acetobutylicum (strain ATCC 824 / DSM 792 / JCM 1419 / IAM 19013 / LMG 5710 / NBRC 13948 / NRRL B-527 / VKM B-1787 / 2291 / W).